The chain runs to 199 residues: Nucleoid occlusion factor SlmA (199 aa).

Positions 11–71 constitute an HTH tetR-type domain; sequence ERRQQVLTVL…ALIDNLEAHL (61 aa). A DNA-binding region (H-T-H motif) is located at residues 34-53; sequence TTARIAAEVGVSEAALYRYY.

It belongs to the nucleoid occlusion factor SlmA family. In terms of assembly, homodimer. Interacts with FtsZ.

Its subcellular location is the cytoplasm. The protein localises to the nucleoid. In terms of biological role, required for nucleoid occlusion (NO) phenomenon, which prevents Z-ring formation and cell division over the nucleoid. Acts as a DNA-associated cell division inhibitor that binds simultaneously chromosomal DNA and FtsZ, and disrupts the assembly of FtsZ polymers. SlmA-DNA-binding sequences (SBS) are dispersed on non-Ter regions of the chromosome, preventing FtsZ polymerization at these regions. This is Nucleoid occlusion factor SlmA from Pasteurella multocida (strain Pm70).